A 121-amino-acid chain; its full sequence is Small ribosomal subunit protein bS6 (121 aa).

The protein belongs to the bacterial ribosomal protein bS6 family.

Its function is as follows. Binds together with bS18 to 16S ribosomal RNA. The sequence is that of Small ribosomal subunit protein bS6 from Rickettsia canadensis (strain McKiel).